Consider the following 255-residue polypeptide: Probable transcriptional regulatory protein CMM_1817 (255 aa).

Belongs to the TACO1 family.

The protein localises to the cytoplasm. This chain is Probable transcriptional regulatory protein CMM_1817, found in Clavibacter michiganensis subsp. michiganensis (strain NCPPB 382).